The primary structure comprises 659 residues: Putative RING finger protein R311 (659 aa).

The RING-type zinc-finger motif lies at 502–540 (CPVCYDDDYIKTKLICGHTVCLTCVLNILPNSKGCPLCM).

The sequence is that of Putative RING finger protein R311 from Acanthamoeba polyphaga (Amoeba).